A 387-amino-acid polypeptide reads, in one-letter code: Putative protein FAM157C (387 aa).

Disordered regions lie at residues 1–21, 182–226, and 329–353; these read MGPL…PLPK, TARP…GAEP, and RARD…TSSG.

It belongs to the FAM157 family.

This chain is Putative protein FAM157C (FAM157C), found in Homo sapiens (Human).